The sequence spans 193 residues: Peptidyl-tRNA hydrolase (193 aa).

Position 16 (Tyr-16) interacts with tRNA. The active-site Proton acceptor is His-21. The tRNA site is built by Tyr-66, Asn-68, and Asn-114.

The protein belongs to the PTH family. In terms of assembly, monomer.

It localises to the cytoplasm. It carries out the reaction an N-acyl-L-alpha-aminoacyl-tRNA + H2O = an N-acyl-L-amino acid + a tRNA + H(+). In terms of biological role, hydrolyzes ribosome-free peptidyl-tRNAs (with 1 or more amino acids incorporated), which drop off the ribosome during protein synthesis, or as a result of ribosome stalling. Functionally, catalyzes the release of premature peptidyl moieties from peptidyl-tRNA molecules trapped in stalled 50S ribosomal subunits, and thus maintains levels of free tRNAs and 50S ribosomes. The sequence is that of Peptidyl-tRNA hydrolase from Geobacter sulfurreducens (strain ATCC 51573 / DSM 12127 / PCA).